The primary structure comprises 298 residues: Ethanolamine ammonia-lyase small subunit (298 aa).

The segment at 15-43 is disordered; that stretch reads ASMGQDVPQPVAPSTQEGAKPQRAAPTAT. Positions 210, 231, and 261 each coordinate adenosylcob(III)alamin.

It belongs to the EutC family. In terms of assembly, the basic unit is a heterodimer which dimerizes to form tetramers. The heterotetramers trimerize; 6 large subunits form a core ring with 6 small subunits projecting outwards. The cofactor is adenosylcob(III)alamin.

The protein localises to the bacterial microcompartment. The enzyme catalyses ethanolamine = acetaldehyde + NH4(+). It participates in amine and polyamine degradation; ethanolamine degradation. Functionally, catalyzes the deamination of various vicinal amino-alcohols to oxo compounds. Allows this organism to utilize ethanolamine as the sole source of nitrogen and carbon in the presence of external vitamin B12. The protein is Ethanolamine ammonia-lyase small subunit of Salmonella arizonae (strain ATCC BAA-731 / CDC346-86 / RSK2980).